A 316-amino-acid chain; its full sequence is MDPALLDDVIRRLLEVKNLKPGKNAQLSESEIKQLCAAAKEIFLQQPNLLELEAPIKICGDVHGQYSDLLRLFDYGGYPPQANYLFLGDYVDRGKQSLETICLLLAYKVKYPENFFLLRGNHECASVNRIYGFYDECKRRFSVKLWKTFTDCFNCLPVSALIDEKILCMHGGLSPELNKLEQILNLNRPTDVPDTGLLCDLLWSDPSNEATGWAINDRGVSFTFGPDKVSEFLEKHDLDLICRAHQVVEDGYEFFASRQLVTIFSAPNYCGEFDNAGAMMSVDDTLMCSFQILKPARKMMGGSTNNKSGFKSFRGW.

Mn(2+)-binding residues include D61, H63, D89, and N121. Residue H122 is the Proton donor of the active site. Residues H170 and H245 each contribute to the Mn(2+) site.

The protein belongs to the PPP phosphatase family. PP-1 subfamily. Mn(2+) serves as cofactor.

The catalysed reaction is O-phospho-L-seryl-[protein] + H2O = L-seryl-[protein] + phosphate. It catalyses the reaction O-phospho-L-threonyl-[protein] + H2O = L-threonyl-[protein] + phosphate. The sequence is that of Serine/threonine-protein phosphatase PP1 (PP1) from Zea mays (Maize).